The primary structure comprises 576 residues: Epsin-1 (576 aa).

Residues arginine 8, lysine 11, arginine 25, asparagine 30, arginine 63, and histidine 73 each coordinate a 1,2-diacyl-sn-glycero-3-phospho-(1D-myo-inositol-4,5-bisphosphate). The 133-residue stretch at 12 to 144 folds into the ENTH domain; that stretch reads NIVHNYSEAE…RDEDRLREER (133 aa). Positions 149–185 are disordered; that stretch reads KTKEKLAQTATASSAAVGSGPPPEAEQAWPQSSGEEE. The span at 157 to 167 shows a compositional bias: low complexity; it reads TATASSAAVGS. UIM domains are found at residues 183–202, 208–227, and 233–252; these read EEELQLQLALAMSKEEADQP, EDDAQLQLALSLSREEHDKE, and GDDLRLQMAIEESKRETGGK. Residues 265-296 are compositionally biased toward low complexity; the sequence is TAPAPAPTTDPWGGPAPMAAAVPTAAPTSDPW. Residues 265–404 are disordered; sequence TAPAPAPTTD…GGFDTEPDEF (140 aa). 8 consecutive repeat copies span residues 274–276, 294–296, 306–308, 319–321, 332–334, 349–351, 367–369, and 377–379. An 8 X 3 AA repeats of [ED]-P-W region spans residues 274-379; that stretch reads DPWGGPAPMA…TPAPAFSDPW (106 aa). The segment covering 297-314 has biased composition (pro residues); it reads GGPPVPPAADPWGGPAPT. The span at 332-368 shows a compositional bias: low complexity; that stretch reads DPWGGTPAPAAGEGPTPDPWGSSDGGVPVSGPSASDP. Serine 382 is subject to Phosphoserine; by CDK1. The [DE]-X(1,2)-F-X-X-[FL]-X-X-X-R motif signature appears at 402–411; it reads DEFSDFDRLR. Residues serine 419, serine 420, serine 435, serine 447, and serine 454 each carry the phosphoserine modification. Residues 448-576 form a disordered region; the sequence is LAEAVGSPPP…PAPNTNPFLL (129 aa). Residues 454 to 468 are compositionally biased toward pro residues; it reads SPPPAATPTPTPPTR. Phosphothreonine occurs at positions 460, 464, and 470. Phosphoserine is present on serine 473. At threonine 494 the chain carries Phosphothreonine. A run of 2 repeats spans residues 502-504 and 518-520. The segment at 502–574 is 3 X 3 AA repeats of N-P-F; it reads NPFLPGGGPA…GPPAPNTNPF (73 aa). Arginine 534 carries the post-translational modification Omega-N-methylarginine. Pro residues predominate over residues 557-570; that stretch reads GLPPMMPPGPPAPN. Repeat unit 3 spans residues 572-574; the sequence is NPF.

This sequence belongs to the epsin family. In terms of assembly, monomer. Binds clathrin, ZBTB16/ZNF145 and ITSN1. Binds ubiquitinated proteins. Binds AP2A1 and AP2A2. Interacts with RALBP1 in a complex also containing NUMB and TFAP2A during interphase and mitosis. Interacts with AP2B1. Interacts with UBQLN2. Interacts with REPS2; the interaction is direct. Interacts with EPS15; the interaction is direct. Interacts with ENTREP1. Phosphorylated on serine and/or threonine residues in mitotic cells. Phosphorylation reduces interaction with REPS2, AP-2 and the membrane fraction. Depolarization of synaptosomes results in dephosphorylation. In terms of processing, ubiquitinated.

The protein localises to the cytoplasm. Its subcellular location is the cell membrane. The protein resides in the nucleus. It localises to the membrane. It is found in the clathrin-coated pit. Functionally, binds to membranes enriched in phosphatidylinositol 4,5-bisphosphate (PtdIns(4,5)P2). Modifies membrane curvature and facilitates the formation of clathrin-coated invaginations. Regulates receptor-mediated endocytosis. This chain is Epsin-1 (EPN1), found in Homo sapiens (Human).